We begin with the raw amino-acid sequence, 333 residues long: Probable 4-hydroxyproline 2-epimerase (333 aa).

C90 (proton acceptor) is an active-site residue. Residues 91–92 (GH), H223, and D249 contribute to the substrate site. The Proton donor role is filled by C253. Residue 254–255 (GT) participates in substrate binding.

The protein belongs to the proline racemase family.

It catalyses the reaction trans-4-hydroxy-L-proline = cis-4-hydroxy-D-proline. Its function is as follows. Likely catalyzes the epimerization of trans-4-hydroxy-L-proline (t4LHyp) to cis-4-hydroxy-D-proline (c4DHyp). May be involved in the degradation pathway that converts t4LHyp to alpha-ketoglutarate, which would allow R.meliloti to grow on t4LHyp as a sole carbon source. This chain is Probable 4-hydroxyproline 2-epimerase, found in Rhizobium meliloti (strain 1021) (Ensifer meliloti).